The primary structure comprises 79 residues: Immunity protein CdiI (79 aa).

Helical transmembrane passes span 12–32 (IIFFPMLCTVLGLLGIPIGLI) and 51–71 (VVLFTLKIGIPIGFILGLGLW).

In terms of assembly, probably interacts with cognate toxin CdiA.

The protein resides in the cell inner membrane. In terms of biological role, immunity protein component of a toxin-immunity protein module, which functions as a cellular contact-dependent growth inhibition (CDI) system. CDI modules allow bacteria to communicate with and inhibit the growth of closely related neighboring bacteria in a contact-dependent fashion. Protects cells against CdiA from the same strain, its cognate toxin protein. Growth inhibition is reversible upon induction of this protein, occurring about 2.5 hours after induction, and requires an energy source. Does not protect against non-cognate CdiA from E.coli strain 563 / UPEC, D.dadantii strain 3937 or Y.pestis strain CO92. The sequence is that of Immunity protein CdiI from Escherichia coli.